The chain runs to 275 residues: Large ribosomal subunit protein uL2 (275 aa).

The segment covering 35–49 (DSQSSTAGRNNNGRI) has biased composition (polar residues). 2 disordered regions span residues 35-59 (DSQS…GGHK) and 224-275 (AMNP…RHKR). Over residues 50–59 (TTRHKGGGHK) the composition is skewed to basic residues.

The protein belongs to the universal ribosomal protein uL2 family. As to quaternary structure, part of the 50S ribosomal subunit. Forms a bridge to the 30S subunit in the 70S ribosome.

In terms of biological role, one of the primary rRNA binding proteins. Required for association of the 30S and 50S subunits to form the 70S ribosome, for tRNA binding and peptide bond formation. It has been suggested to have peptidyltransferase activity; this is somewhat controversial. Makes several contacts with the 16S rRNA in the 70S ribosome. The chain is Large ribosomal subunit protein uL2 from Burkholderia cenocepacia (strain HI2424).